The primary structure comprises 147 residues: Protein-export protein SecB (147 aa).

It belongs to the SecB family. As to quaternary structure, homotetramer, a dimer of dimers. One homotetramer interacts with 1 SecA dimer.

Its subcellular location is the cytoplasm. One of the proteins required for the normal export of preproteins out of the cell cytoplasm. It is a molecular chaperone that binds to a subset of precursor proteins, maintaining them in a translocation-competent state. It also specifically binds to its receptor SecA. The sequence is that of Protein-export protein SecB from Neisseria meningitidis serogroup B (strain ATCC BAA-335 / MC58).